A 284-amino-acid polypeptide reads, in one-letter code: Nucleoid occlusion protein (284 aa).

The H-T-H motif DNA-binding region spans 143 to 162 (EALAQRVGKSQSAIANKMRL).

It belongs to the ParB family.

The protein localises to the cytoplasm. It localises to the nucleoid. In terms of biological role, effects nucleoid occlusion by binding relatively nonspecifically to DNA and preventing the assembly of the division machinery in the vicinity of the nucleoid, especially under conditions that disturb the cell cycle. It helps to coordinate cell division and chromosome segregation by preventing the formation of the Z ring through the nucleoid, which would cause chromosome breakage. This chain is Nucleoid occlusion protein, found in Listeria innocua serovar 6a (strain ATCC BAA-680 / CLIP 11262).